Consider the following 252-residue polypeptide: Phosphoribosyl-ATP pyrophosphatase (252 aa).

Belongs to the PRA-PH family.

It is found in the cytoplasm. It carries out the reaction 1-(5-phospho-beta-D-ribosyl)-ATP + H2O = 1-(5-phospho-beta-D-ribosyl)-5'-AMP + diphosphate + H(+). It functions in the pathway amino-acid biosynthesis; L-histidine biosynthesis; L-histidine from 5-phospho-alpha-D-ribose 1-diphosphate: step 2/9. The protein is Phosphoribosyl-ATP pyrophosphatase of Magnetococcus marinus (strain ATCC BAA-1437 / JCM 17883 / MC-1).